Here is a 439-residue protein sequence, read N- to C-terminus: Serine hydroxymethyltransferase (439 aa).

126–128 (AHV) serves as a coordination point for (6S)-5,6,7,8-tetrahydrofolate. Lysine 232 bears the N6-(pyridoxal phosphate)lysine mark.

The protein belongs to the SHMT family. Homodimer. The cofactor is pyridoxal 5'-phosphate.

The protein localises to the cytoplasm. The protein operates within amino-acid biosynthesis; glycine biosynthesis; glycine from L-serine: step 1/1. Its function is as follows. Catalyzes the reversible interconversion of serine and glycine with a modified folate serving as the one-carbon carrier. Also exhibits a pteridine-independent aldolase activity toward beta-hydroxyamino acids, producing glycine and aldehydes, via a retro-aldol mechanism. The sequence is that of Serine hydroxymethyltransferase from Staphylothermus marinus (strain ATCC 43588 / DSM 3639 / JCM 9404 / F1).